A 278-amino-acid chain; its full sequence is Octanoyltransferase LipM (278 aa).

One can recognise a BPL/LPL catalytic domain in the interval K33–L248. C150 (acyl-thioester intermediate) is an active-site residue.

Belongs to the octanoyltransferase LipM family. In terms of assembly, monomer.

It catalyses the reaction octanoyl-[ACP] + L-lysyl-[protein] = N(6)-octanoyl-L-lysyl-[protein] + holo-[ACP] + H(+). The protein operates within protein modification; protein lipoylation via endogenous pathway; protein N(6)-(lipoyl)lysine from octanoyl-[acyl-carrier-protein]. Its function is as follows. Catalyzes the transfer of endogenously produced octanoic acid from octanoyl-acyl-carrier-protein onto the lipoyl domain of GcvH, an intermediate carrier during protein lipoylation. In Bacillus anthracis, this protein is Octanoyltransferase LipM.